Consider the following 575-residue polypeptide: 2-succinyl-5-enolpyruvyl-6-hydroxy-3-cyclohexene-1-carboxylate synthase (575 aa).

It belongs to the TPP enzyme family. MenD subfamily. Homodimer. It depends on Mg(2+) as a cofactor. The cofactor is Mn(2+). Requires thiamine diphosphate as cofactor.

It catalyses the reaction isochorismate + 2-oxoglutarate + H(+) = 5-enolpyruvoyl-6-hydroxy-2-succinyl-cyclohex-3-ene-1-carboxylate + CO2. The protein operates within quinol/quinone metabolism; 1,4-dihydroxy-2-naphthoate biosynthesis; 1,4-dihydroxy-2-naphthoate from chorismate: step 2/7. It functions in the pathway quinol/quinone metabolism; menaquinone biosynthesis. In terms of biological role, catalyzes the thiamine diphosphate-dependent decarboxylation of 2-oxoglutarate and the subsequent addition of the resulting succinic semialdehyde-thiamine pyrophosphate anion to isochorismate to yield 2-succinyl-5-enolpyruvyl-6-hydroxy-3-cyclohexene-1-carboxylate (SEPHCHC). The protein is 2-succinyl-5-enolpyruvyl-6-hydroxy-3-cyclohexene-1-carboxylate synthase of Syntrophus aciditrophicus (strain SB).